We begin with the raw amino-acid sequence, 108 residues long: Large ribosomal subunit protein uL22 (108 aa).

This sequence belongs to the universal ribosomal protein uL22 family. In terms of assembly, part of the 50S ribosomal subunit.

In terms of biological role, this protein binds specifically to 23S rRNA; its binding is stimulated by other ribosomal proteins, e.g. L4, L17, and L20. It is important during the early stages of 50S assembly. It makes multiple contacts with different domains of the 23S rRNA in the assembled 50S subunit and ribosome. Functionally, the globular domain of the protein is located near the polypeptide exit tunnel on the outside of the subunit, while an extended beta-hairpin is found that lines the wall of the exit tunnel in the center of the 70S ribosome. This is Large ribosomal subunit protein uL22 from Desulfatibacillum aliphaticivorans.